A 211-amino-acid polypeptide reads, in one-letter code: Thiamine-phosphate synthase (211 aa).

4-amino-2-methyl-5-(diphosphooxymethyl)pyrimidine contacts are provided by residues 39–43 and Asn-71; that span reads QLREK. The Mg(2+) site is built by Asp-72 and Asp-91. A 4-amino-2-methyl-5-(diphosphooxymethyl)pyrimidine-binding site is contributed by Ser-110. 136-138 provides a ligand contact to 2-[(2R,5Z)-2-carboxy-4-methylthiazol-5(2H)-ylidene]ethyl phosphate; the sequence is TAT. Position 139 (Lys-139) interacts with 4-amino-2-methyl-5-(diphosphooxymethyl)pyrimidine. Residues Ala-167 and 187–188 contribute to the 2-[(2R,5Z)-2-carboxy-4-methylthiazol-5(2H)-ylidene]ethyl phosphate site; that span reads VS.

Belongs to the thiamine-phosphate synthase family. Mg(2+) is required as a cofactor.

The catalysed reaction is 2-[(2R,5Z)-2-carboxy-4-methylthiazol-5(2H)-ylidene]ethyl phosphate + 4-amino-2-methyl-5-(diphosphooxymethyl)pyrimidine + 2 H(+) = thiamine phosphate + CO2 + diphosphate. It carries out the reaction 2-(2-carboxy-4-methylthiazol-5-yl)ethyl phosphate + 4-amino-2-methyl-5-(diphosphooxymethyl)pyrimidine + 2 H(+) = thiamine phosphate + CO2 + diphosphate. The enzyme catalyses 4-methyl-5-(2-phosphooxyethyl)-thiazole + 4-amino-2-methyl-5-(diphosphooxymethyl)pyrimidine + H(+) = thiamine phosphate + diphosphate. It participates in cofactor biosynthesis; thiamine diphosphate biosynthesis; thiamine phosphate from 4-amino-2-methyl-5-diphosphomethylpyrimidine and 4-methyl-5-(2-phosphoethyl)-thiazole: step 1/1. Its function is as follows. Condenses 4-methyl-5-(beta-hydroxyethyl)thiazole monophosphate (THZ-P) and 2-methyl-4-amino-5-hydroxymethyl pyrimidine pyrophosphate (HMP-PP) to form thiamine monophosphate (TMP). The protein is Thiamine-phosphate synthase of Solidesulfovibrio magneticus (strain ATCC 700980 / DSM 13731 / RS-1) (Desulfovibrio magneticus).